Here is a 156-residue protein sequence, read N- to C-terminus: Ribosomal RNA large subunit methyltransferase H (156 aa).

S-adenosyl-L-methionine is bound by residues leucine 73, glycine 104, and 123 to 128 (IGPLTL).

It belongs to the RNA methyltransferase RlmH family. As to quaternary structure, homodimer.

The protein localises to the cytoplasm. The enzyme catalyses pseudouridine(1915) in 23S rRNA + S-adenosyl-L-methionine = N(3)-methylpseudouridine(1915) in 23S rRNA + S-adenosyl-L-homocysteine + H(+). Its function is as follows. Specifically methylates the pseudouridine at position 1915 (m3Psi1915) in 23S rRNA. The protein is Ribosomal RNA large subunit methyltransferase H of Xanthomonas oryzae pv. oryzae (strain MAFF 311018).